The sequence spans 336 residues: Adenylosuccinate synthetase (336 aa).

GTP is bound by residues 12–18 (GDEGKGK) and 42–44 (GHS). Catalysis depends on Asp-13, which acts as the Proton acceptor. Positions 13 and 42 each coordinate Mg(2+). Residues 13–16 (DEGK), 40–43 (NAGH), Thr-127, Arg-141, Gln-179, Thr-194, and Arg-256 each bind IMP. The active-site Proton donor is His-43. 252 to 258 (TVTGRRR) serves as a coordination point for substrate. GTP contacts are provided by residues Arg-258, 284-286 (CLD), and 324-326 (STG).

Belongs to the adenylosuccinate synthetase family. In terms of assembly, homodimer. Mg(2+) is required as a cofactor.

Its subcellular location is the cytoplasm. It carries out the reaction IMP + L-aspartate + GTP = N(6)-(1,2-dicarboxyethyl)-AMP + GDP + phosphate + 2 H(+). Its pathway is purine metabolism; AMP biosynthesis via de novo pathway; AMP from IMP: step 1/2. Its function is as follows. Plays an important role in the de novo pathway of purine nucleotide biosynthesis. Catalyzes the first committed step in the biosynthesis of AMP from IMP. This is Adenylosuccinate synthetase from Methanococcus aeolicus (strain ATCC BAA-1280 / DSM 17508 / OCM 812 / Nankai-3).